The following is a 122-amino-acid chain: Large ribosomal subunit protein uL14 (122 aa).

Belongs to the universal ribosomal protein uL14 family. As to quaternary structure, part of the 50S ribosomal subunit. Forms a cluster with proteins L3 and L19. In the 70S ribosome, L14 and L19 interact and together make contacts with the 16S rRNA in bridges B5 and B8.

Functionally, binds to 23S rRNA. Forms part of two intersubunit bridges in the 70S ribosome. The sequence is that of Large ribosomal subunit protein uL14 from Delftia acidovorans (strain DSM 14801 / SPH-1).